A 299-amino-acid chain; its full sequence is Proline iminopeptidase (299 aa).

The AB hydrolase-1 domain maps to 26 to 272; the sequence is VLLLAGGPGF…QFLYCANGSH (247 aa). The active-site Nucleophile is S103. D245 is an active-site residue. The active-site Proton donor is the H272.

The protein belongs to the peptidase S33 family. In terms of assembly, monomer.

The enzyme catalyses Release of N-terminal proline from a peptide.. Functionally, releases the N-terminal proline from various substrates. The sequence is that of Proline iminopeptidase from Chitinophaga pinensis (strain ATCC 43595 / DSM 2588 / LMG 13176 / NBRC 15968 / NCIMB 11800 / UQM 2034).